The primary structure comprises 110 residues: Large ribosomal subunit protein uL24 (110 aa).

The protein belongs to the universal ribosomal protein uL24 family. Part of the 50S ribosomal subunit.

Functionally, one of two assembly initiator proteins, it binds directly to the 5'-end of the 23S rRNA, where it nucleates assembly of the 50S subunit. Its function is as follows. One of the proteins that surrounds the polypeptide exit tunnel on the outside of the subunit. In Thermus thermophilus (strain ATCC BAA-163 / DSM 7039 / HB27), this protein is Large ribosomal subunit protein uL24.